Here is a 95-residue protein sequence, read N- to C-terminus: Aspartyl/glutamyl-tRNA(Asn/Gln) amidotransferase subunit C (95 aa).

This sequence belongs to the GatC family. Heterotrimer of A, B and C subunits.

The catalysed reaction is L-glutamyl-tRNA(Gln) + L-glutamine + ATP + H2O = L-glutaminyl-tRNA(Gln) + L-glutamate + ADP + phosphate + H(+). The enzyme catalyses L-aspartyl-tRNA(Asn) + L-glutamine + ATP + H2O = L-asparaginyl-tRNA(Asn) + L-glutamate + ADP + phosphate + 2 H(+). Its function is as follows. Allows the formation of correctly charged Asn-tRNA(Asn) or Gln-tRNA(Gln) through the transamidation of misacylated Asp-tRNA(Asn) or Glu-tRNA(Gln) in organisms which lack either or both of asparaginyl-tRNA or glutaminyl-tRNA synthetases. The reaction takes place in the presence of glutamine and ATP through an activated phospho-Asp-tRNA(Asn) or phospho-Glu-tRNA(Gln). This Bartonella quintana (strain Toulouse) (Rochalimaea quintana) protein is Aspartyl/glutamyl-tRNA(Asn/Gln) amidotransferase subunit C.